Consider the following 468-residue polypeptide: MTKTLPKDFIFGGATAAYQAEGATHTDGKGPVAWDKYLEDNYWYTAEPASDFYNRYPVDLKLAEEYGVNGIRISIAWSRIFPTGYGQVNAKGVEFYHNLFAECHKRHVEPFVTLHHFDTPEALHSNGDFLNRENIEHFVDYAAFCFEEFPEVNYWTTFNEIGPIGDGQYLVGKFPPGIQYDLAKVFQSHHNMMVSHARAVKLYKDKGYKGEIGVVHALPTKYPLDHENPADVRAAELEDIIHNKFILDATYLGRYSAETMEGVNHILSVNGGSLDLREEDFTALEAAKDLNDFLGINYYMSDWMEAFDGETEIIHNGKGKKGSSKYQIKGVGRRVAPDYVPRTDWDWIIYPQGLYDQIMRVKKDYPNYKKIYITENGLGYKDEFVDNTVYDDGRIDYVKQHLEILSDAIADGANVKGYFIWSLMDVFSWSNGYEKRYGLFYVDFETQERYPKKSAHWYKKVAETQIID.

The D-galactose 6-phosphate site is built by Gln19, His116, Asn159, Glu160, and Asn297. The Proton donor role is filled by Glu160. The active-site Nucleophile is the Glu375. D-galactose 6-phosphate-binding residues include Ser428, Trp429, Lys435, and Tyr437.

This sequence belongs to the glycosyl hydrolase 1 family.

The catalysed reaction is a 6-phospho-beta-D-galactoside + H2O = D-galactose 6-phosphate + an alcohol. The protein operates within carbohydrate metabolism; lactose degradation; D-galactose 6-phosphate and beta-D-glucose from lactose 6-phosphate: step 1/1. This is 6-phospho-beta-galactosidase 2 from Streptococcus pneumoniae (strain ATCC BAA-255 / R6).